The following is a 495-amino-acid chain: Probable plastidic glucose transporter 3 (495 aa).

A run of 12 helical transmembrane segments spans residues 55–75, 97–117, 131–151, 154–174, 183–203, 214–234, 294–314, 330–350, 357–377, 384–404, 425–445, and 451–471; these read LPHVLVASLTSLLFGYHLGVV, LVVSTCLGGAFIGSLFSGLVA, LPMIVGASVSASTESLMGMLL, FLVGIGMGIGPSVTALYVTEV, YGSSTQIATCIGLLGSLFAGI, ICFWISTVPAAMLAVFMELCV, VVFIGSTLFALQQLSGINAVF, SANICVGVCNLLGSTVAVVLM, VLLIGSFAGMAVSLGLQAIAY, FGTLFLSVGGMLLFVLSFATG, ALAVCLAVHWVINFFVGLLFL, and LGSVLLNAIFGFFCVVAVIFV.

Belongs to the major facilitator superfamily. Sugar transporter (TC 2.A.1.1) family.

It is found in the plastid. Its subcellular location is the chloroplast membrane. May be involved in the efflux of glucose towards the cytosol. In Arabidopsis thaliana (Mouse-ear cress), this protein is Probable plastidic glucose transporter 3.